The chain runs to 207 residues: 3-hexulose-6-phosphate synthase (207 aa).

The protein belongs to the HPS/KGPDC family. HPS subfamily.

The catalysed reaction is D-ribulose 5-phosphate + formaldehyde = D-arabino-hex-3-ulose 6-phosphate. The protein operates within one-carbon metabolism; formaldehyde assimilation via RuMP pathway; D-fructose 6-phosphate from D-ribulose 5-phosphate and formaldehyde: step 1/2. Its function is as follows. Catalyzes the condensation of ribulose 5-phosphate with formaldehyde to form 3-hexulose 6-phosphate. This is 3-hexulose-6-phosphate synthase (rmpA) from Mycobacterium gastri.